A 415-amino-acid polypeptide reads, in one-letter code: 8-amino-7-oxononanoate synthase (415 aa).

Arg21 provides a ligand contact to substrate. Residue 117 to 118 (GY) participates in pyridoxal 5'-phosphate binding. His149 provides a ligand contact to substrate. 3 residues coordinate pyridoxal 5'-phosphate: Ser195, His223, and Thr251. Lys254 bears the N6-(pyridoxal phosphate)lysine mark. Thr374 serves as a coordination point for substrate.

Belongs to the class-II pyridoxal-phosphate-dependent aminotransferase family. BioF subfamily. Homodimer. It depends on pyridoxal 5'-phosphate as a cofactor.

It catalyses the reaction 6-carboxyhexanoyl-[ACP] + L-alanine + H(+) = (8S)-8-amino-7-oxononanoate + holo-[ACP] + CO2. The protein operates within cofactor biosynthesis; biotin biosynthesis. Its function is as follows. Catalyzes the decarboxylative condensation of pimeloyl-[acyl-carrier protein] and L-alanine to produce 8-amino-7-oxononanoate (AON), [acyl-carrier protein], and carbon dioxide. In Ralstonia pickettii (strain 12J), this protein is 8-amino-7-oxononanoate synthase.